Reading from the N-terminus, the 89-residue chain is Small ribosomal subunit protein uS15 (89 aa).

It belongs to the universal ribosomal protein uS15 family. As to quaternary structure, part of the 30S ribosomal subunit. Forms a bridge to the 50S subunit in the 70S ribosome, contacting the 23S rRNA.

Functionally, one of the primary rRNA binding proteins, it binds directly to 16S rRNA where it helps nucleate assembly of the platform of the 30S subunit by binding and bridging several RNA helices of the 16S rRNA. Forms an intersubunit bridge (bridge B4) with the 23S rRNA of the 50S subunit in the ribosome. The chain is Small ribosomal subunit protein uS15 from Exiguobacterium sp. (strain ATCC BAA-1283 / AT1b).